The sequence spans 303 residues: Recombination-associated protein RdgC (303 aa).

Belongs to the RdgC family.

It localises to the cytoplasm. The protein localises to the nucleoid. May be involved in recombination. The protein is Recombination-associated protein RdgC of Yersinia pseudotuberculosis serotype O:1b (strain IP 31758).